The chain runs to 259 residues: Adenylate kinase (259 aa).

ATP is bound at residue 52-57 (GAGKGT). The tract at residues 72 to 101 (ATGDMLRSQVAKKTDLGREAKKIMDQGGLV) is NMP. Residues Thr-73, Arg-78, 99–101 (GLV), 128–131 (GFPR), and Gln-135 each bind AMP. The LID stretch occupies residues 169–206 (GRLVHPASGRSYHKIFNPPKEAMKDDITGEPLVQRSDD). Residues Arg-170 and 179–180 (SY) each bind ATP. Positions 203 and 214 each coordinate AMP. Gln-242 contributes to the ATP binding site.

The protein belongs to the adenylate kinase family. AK2 subfamily. Monomer.

Its subcellular location is the cytoplasm. It localises to the mitochondrion intermembrane space. It catalyses the reaction AMP + ATP = 2 ADP. In terms of biological role, catalyzes the reversible transfer of the terminal phosphate group between ATP and AMP. Plays an important role in cellular energy homeostasis and in adenine nucleotide metabolism. Adenylate kinase activity is critical for regulation of the phosphate utilization and the AMP de novo biosynthesis pathways. The sequence is that of Adenylate kinase (adk1) from Emericella nidulans (strain FGSC A4 / ATCC 38163 / CBS 112.46 / NRRL 194 / M139) (Aspergillus nidulans).